The chain runs to 210 residues: Orotate phosphoribosyltransferase (210 aa).

Residues Arg-97, Lys-98, and 125–133 each bind 5-phospho-alpha-D-ribose 1-diphosphate; that span reads NDMVSSGKS. Orotate-binding residues include Ser-129 and Arg-157.

It belongs to the purine/pyrimidine phosphoribosyltransferase family. PyrE subfamily. Homodimer. Mg(2+) is required as a cofactor.

The enzyme catalyses orotidine 5'-phosphate + diphosphate = orotate + 5-phospho-alpha-D-ribose 1-diphosphate. It functions in the pathway pyrimidine metabolism; UMP biosynthesis via de novo pathway; UMP from orotate: step 1/2. In terms of biological role, catalyzes the transfer of a ribosyl phosphate group from 5-phosphoribose 1-diphosphate to orotate, leading to the formation of orotidine monophosphate (OMP). The sequence is that of Orotate phosphoribosyltransferase from Chlamydia pneumoniae (Chlamydophila pneumoniae).